Here is a 232-residue protein sequence, read N- to C-terminus: MAGAWSSNCCRGSSTGCMCCNKGKRNDSLLLGKRLSEDSSRQQLLQKWESMWSSTSGDASEGDTEKERLEEAAVAEEKPLVFLCSGCRRPLGDSLSWVTNQEDTNCILLRSVSCNVSVDKEQKLSKREKENGCILETLYCAGCSLNLGYVYRCTPRDLDSKRDLFCLSVEAIESYILGSAEKQIVSEDKELFNLESRVEIEKSLKQMEDVLKALHMKLWEVESKLSFAGSKS.

Phosphoserine is present on residues Ser-36, Ser-39, and Ser-40. A Mis18 domain is found at 79–177 (PLVFLCSGCR…SVEAIESYIL (99 aa)). Residues Cys-84, Cys-87, Cys-140, and Cys-143 each contribute to the Zn(2+) site. A Glycyl lysine isopeptide (Lys-Gly) (interchain with G-Cter in SUMO2) cross-link involves residue Lys-161. The residue at position 232 (Ser-232) is a Phosphoserine.

The protein belongs to the mis18 family. Homodimer, and heterodimer with OIP5/MIS18B. Identified in a complex containing MIS18A, OIP5/MIS18B, MIS18BP1, RBBP7 and RBBP4.

It is found in the nucleus. The protein localises to the chromosome. It localises to the centromere. Its function is as follows. Required for recruitment of CENPA to centromeres and normal chromosome segregation during mitosis. This chain is Protein Mis18-alpha (MIS18A), found in Otolemur garnettii (Small-eared galago).